The primary structure comprises 197 residues: Recombination protein RecR (197 aa).

Residues 57 to 72 form a C4-type zinc finger; the sequence is CSVCFALTEQNPCPIC. The 96-residue stretch at 79 to 174 folds into the Toprim domain; sequence SVICVVETSQ…RVTRLAHGIP (96 aa).

This sequence belongs to the RecR family.

Its function is as follows. May play a role in DNA repair. It seems to be involved in an RecBC-independent recombinational process of DNA repair. It may act with RecF and RecO. The sequence is that of Recombination protein RecR from Trichlorobacter lovleyi (strain ATCC BAA-1151 / DSM 17278 / SZ) (Geobacter lovleyi).